A 536-amino-acid polypeptide reads, in one-letter code: Phosphoenolpyruvate carboxykinase (ATP) (536 aa).

The substrate site is built by R61, Y195, and K201. Residues K201, H220, and 236–244 (GLSGTGKTT) contribute to the ATP site. Residues K201 and H220 each contribute to the Mn(2+) site. D257 contacts Mn(2+). 3 residues coordinate ATP: E285, R322, and T447. R322 is a substrate binding site.

The protein belongs to the phosphoenolpyruvate carboxykinase (ATP) family. It depends on Mn(2+) as a cofactor.

The protein localises to the cytoplasm. The enzyme catalyses oxaloacetate + ATP = phosphoenolpyruvate + ADP + CO2. The protein operates within carbohydrate biosynthesis; gluconeogenesis. Involved in the gluconeogenesis. Catalyzes the conversion of oxaloacetate (OAA) to phosphoenolpyruvate (PEP) through direct phosphoryl transfer between the nucleoside triphosphate and OAA. This chain is Phosphoenolpyruvate carboxykinase (ATP), found in Sinorhizobium medicae (strain WSM419) (Ensifer medicae).